The primary structure comprises 244 residues: MDRRFTVFLVIALVTSIYEVLSNGNLNDGDDSFKQFDELEENPAHKYSKEAQKGFEMEEEEVTIREPSGTKESFKLPINMPPVKFSFCVSCGYRQAYEQFAQILREKYPGIDIHGENYPPGILRTVGAQVIGMVKIALIVCVVSGRSPFPTLGLETPTFFQWMLSNRLSAALMLFLFSNAIEGMLQSTGAFEIYIESERIWSKLESGRVPSPPELFQAIDSHLAIRRGGAGRFGSSSSFGIDGS.

Residues 1–22 form the signal peptide; sequence MDRRFTVFLVIALVTSIYEVLS. Cys88 and Cys91 are joined by a disulfide.

The protein belongs to the SelWTH family. SELT subfamily.

The polypeptide is Putative esophageal gland cell secretory protein 6 (HSP6) (Heterodera glycines (Soybean cyst nematode worm)).